The sequence spans 378 residues: Beta-1,3-galactosyltransferase 4 (378 aa).

The Cytoplasmic segment spans residues 1–8; the sequence is MQLRLFRR. Residues 9–19 traverse the membrane as a helical; Signal-anchor for type II membrane protein segment; the sequence is LLLAALLLVIV. Over 20–378 the chain is Lumenal; the sequence is WTLFGPSGLG…RCRAIAWLQS (359 aa). Asn-149 carries N-linked (GlcNAc...) asparagine glycosylation.

Belongs to the glycosyltransferase 31 family. In terms of tissue distribution, highly expressed in heart, skeletal muscle and pancreas and, to a lesser extent, in brain, placenta, kidney, liver and lung.

The protein localises to the golgi apparatus membrane. It catalyses the reaction a ganglioside GM2 (d18:1(4E)) + UDP-alpha-D-galactose = a ganglioside GM1 (d18:1(4E)) + UDP + H(+). The catalysed reaction is a ganglioside GM2 + UDP-alpha-D-galactose = a ganglioside GM1 + UDP + H(+). The enzyme catalyses a ganglioside GD2 (d18:1(4E)) + UDP-alpha-D-galactose = a ganglioside GD1b (d18:1(4E)) + UDP + H(+). It carries out the reaction a ganglioside GA2 (d18:1(4E)) + UDP-alpha-D-galactose = a ganglioside GA1 (d18:1(4E)) + UDP + H(+). The protein operates within protein modification; protein glycosylation. Involved in GM1/GD1B/GA1 ganglioside biosynthesis. The polypeptide is Beta-1,3-galactosyltransferase 4 (Homo sapiens (Human)).